Consider the following 379-residue polypeptide: S-(hydroxymethyl)glutathione dehydrogenase (379 aa).

Residue C47 participates in Zn(2+) binding. NAD(+) is bound at residue H48. Positions 69, 70, 99, 102, 105, 113, and 176 each coordinate Zn(2+). NAD(+) contacts are provided by residues 201 to 206, D225, and 296 to 298; these read GAGCIG and IGV.

The protein belongs to the zinc-containing alcohol dehydrogenase family. Class-III subfamily. The cofactor is Zn(2+).

The enzyme catalyses a primary alcohol + NAD(+) = an aldehyde + NADH + H(+). It catalyses the reaction a secondary alcohol + NAD(+) = a ketone + NADH + H(+). It carries out the reaction S-(hydroxymethyl)glutathione + NADP(+) = S-formylglutathione + NADPH + H(+). The catalysed reaction is S-(hydroxymethyl)glutathione + NAD(+) = S-formylglutathione + NADH + H(+). The enzyme catalyses S-nitrosoglutathione + NADH + H(+) = S-(hydroxysulfenamide)glutathione + NAD(+). Oxidizes long-chain alcohols and, in the presence of glutathione, is able to oxidize formaldehyde. Also acts as a S-nitroso-glutathione reductase by catalyzing the NADH-dependent reduction of S-nitrosoglutathione, thereby regulating protein S-nitrosylation. The polypeptide is S-(hydroxymethyl)glutathione dehydrogenase (FLD1) (Komagataella pastoris (Yeast)).